Reading from the N-terminus, the 605-residue chain is Leucine-rich repeat-containing protein 40 (605 aa).

Residues 1-26 (MSRFRRGGKAPDPLSGFRAPKEQEPA) are disordered. LRR repeat units follow at residues 83 to 104 (DLTK…ISLL), 106 to 127 (ALVV…IKEL), 129 to 151 (NLQK…QHLQ), 152 to 173 (NLKS…IGHL), 175 to 196 (ILEE…VGQL), 198 to 219 (GLVK…IGKM), 221 to 242 (NLKQ…VAGM), 244 to 265 (SLEQ…PFLT), 266 to 287 (KLKE…HLQN), 290 to 311 (SLSV…ISLL), 313 to 335 (GLER…GSLP), 336 to 357 (NLKS…ILNK), 429 to 450 (FITT…IVEM), 453 to 475 (SVCD…CMLL), 476 to 497 (KLTH…MEAM), 499 to 520 (RLQS…LYRI), 522 to 543 (TLET…QLIK), 546 to 567 (KLST…LGNC), and 569 to 590 (SLRA…ILAK).

This chain is Leucine-rich repeat-containing protein 40 (lrrc40), found in Xenopus tropicalis (Western clawed frog).